The following is a 158-amino-acid chain: Endoribonuclease YbeY (158 aa).

Zn(2+) contacts are provided by H124, H128, and H134.

The protein belongs to the endoribonuclease YbeY family. It depends on Zn(2+) as a cofactor.

It localises to the cytoplasm. Single strand-specific metallo-endoribonuclease involved in late-stage 70S ribosome quality control and in maturation of the 3' terminus of the 16S rRNA. The sequence is that of Endoribonuclease YbeY from Caldicellulosiruptor saccharolyticus (strain ATCC 43494 / DSM 8903 / Tp8T 6331).